We begin with the raw amino-acid sequence, 256 residues long: Ribosomal RNA small subunit methyltransferase A (256 aa).

Residues Asn12, Leu14, Gly39, Glu60, Asp85, and Asn103 each contribute to the S-adenosyl-L-methionine site.

The protein belongs to the class I-like SAM-binding methyltransferase superfamily. rRNA adenine N(6)-methyltransferase family. RsmA subfamily.

The protein localises to the cytoplasm. It catalyses the reaction adenosine(1518)/adenosine(1519) in 16S rRNA + 4 S-adenosyl-L-methionine = N(6)-dimethyladenosine(1518)/N(6)-dimethyladenosine(1519) in 16S rRNA + 4 S-adenosyl-L-homocysteine + 4 H(+). Its function is as follows. Specifically dimethylates two adjacent adenosines (A1518 and A1519) in the loop of a conserved hairpin near the 3'-end of 16S rRNA in the 30S particle. May play a critical role in biogenesis of 30S subunits. The sequence is that of Ribosomal RNA small subunit methyltransferase A from Legionella pneumophila subsp. pneumophila (strain Philadelphia 1 / ATCC 33152 / DSM 7513).